The chain runs to 245 residues: Small ribosomal subunit protein uS2 (245 aa).

The protein belongs to the universal ribosomal protein uS2 family.

In Pseudomonas putida (strain ATCC 47054 / DSM 6125 / CFBP 8728 / NCIMB 11950 / KT2440), this protein is Small ribosomal subunit protein uS2.